The sequence spans 360 residues: Probable neutral protease 2 homolog MCYG_04257 (360 aa).

An N-terminal signal peptide occupies residues 1–17; sequence MQLIAFLAALGVPVAFA. A propeptide spanning residues 18–182 is cleaved from the precursor; the sequence is ATIPSVPLNH…KVKAGSIDKR (165 aa). An intrachain disulfide couples cysteine 190 to cysteine 261. N-linked (GlcNAc...) asparagine glycosylation occurs at asparagine 262. 2 disulfides stabilise this stretch: cysteine 268–cysteine 286 and cysteine 300–cysteine 360. Histidine 311 lines the Zn(2+) pocket. The active site involves glutamate 312. Residues histidine 315 and aspartate 326 each contribute to the Zn(2+) site.

This sequence belongs to the peptidase M35 family. Zn(2+) is required as a cofactor.

It localises to the secreted. The enzyme catalyses Preferential cleavage of bonds with hydrophobic residues in P1'. Also 3-Asn-|-Gln-4 and 8-Gly-|-Ser-9 bonds in insulin B chain.. Its function is as follows. Probable secreted metalloprotease that shows high activities on basic nuclear substrates such as histone and protamine. May be involved in virulence. The polypeptide is Probable neutral protease 2 homolog MCYG_04257 (Arthroderma otae (strain ATCC MYA-4605 / CBS 113480) (Microsporum canis)).